A 567-amino-acid chain; its full sequence is Oxygen-dependent choline dehydrogenase (567 aa).

4–33 (DYIIIGAGSAGNVLAARLTEDADVTVLLLE) contacts FAD. His-473 (proton acceptor) is an active-site residue.

Belongs to the GMC oxidoreductase family. FAD is required as a cofactor.

It carries out the reaction choline + A = betaine aldehyde + AH2. The catalysed reaction is betaine aldehyde + NAD(+) + H2O = glycine betaine + NADH + 2 H(+). The protein operates within amine and polyamine biosynthesis; betaine biosynthesis via choline pathway; betaine aldehyde from choline (cytochrome c reductase route): step 1/1. Functionally, involved in the biosynthesis of the osmoprotectant glycine betaine. Catalyzes the oxidation of choline to betaine aldehyde and betaine aldehyde to glycine betaine at the same rate. This Yersinia pseudotuberculosis serotype O:1b (strain IP 31758) protein is Oxygen-dependent choline dehydrogenase.